The following is a 92-amino-acid chain: Small ribosomal subunit protein uS19 (92 aa).

The protein belongs to the universal ribosomal protein uS19 family.

Its function is as follows. Protein S19 forms a complex with S13 that binds strongly to the 16S ribosomal RNA. This is Small ribosomal subunit protein uS19 from Shigella boydii serotype 18 (strain CDC 3083-94 / BS512).